Consider the following 113-residue polypeptide: Large ribosomal subunit protein bL19 (113 aa).

The protein belongs to the bacterial ribosomal protein bL19 family.

Its function is as follows. This protein is located at the 30S-50S ribosomal subunit interface and may play a role in the structure and function of the aminoacyl-tRNA binding site. This Corynebacterium efficiens (strain DSM 44549 / YS-314 / AJ 12310 / JCM 11189 / NBRC 100395) protein is Large ribosomal subunit protein bL19.